A 347-amino-acid chain; its full sequence is Trace amine-associated receptor 4 (347 aa).

Topologically, residues 1–37 (MNTPDPWSSPEVQFCFAAANSSCPRKARPALVVCAMY) are extracellular. An N-linked (GlcNAc...) asparagine glycan is attached at asparagine 20. Disulfide bonds link cysteine 23-cysteine 187 and cysteine 106-cysteine 191. Residues 38 to 58 (LIMIGAIVMTMLGNMAVIISI) traverse the membrane as a helical segment. Over 59–69 (AHFKQLHSPTN) the chain is Cytoplasmic. The chain crosses the membrane as a helical span at residues 70–90 (FLILSMATTDFLLSCVVMPFS). Residues 91–110 (MIRSIESCWYFGDLFCKVHS) are Extracellular-facing. A helical transmembrane segment spans residues 111 to 129 (CCDIMLCTTSIFHLCFISV). The Cytoplasmic portion of the chain corresponds to 130–149 (DRHYAVCDPLHYVTQITTRV). Residues 150–170 (VGVFLLISWSVPIFFAFGLVF) traverse the membrane as a helical segment. Residues 171 to 197 (SELNLIGAEDFVAAIDCTGLCVLIFNK) lie on the Extracellular side of the membrane. Positions 175–188 (LIGAEDFVAAIDCT) are extracellular Loop 2 (ECL2). A helical membrane pass occupies residues 198-218 (LWGVLASFIAFFLPGTVMVGI). Residues 219–260 (YIHIFTVAQKHARQIGTGPRTKQALSESKMKATSKKESKATK) are Cytoplasmic-facing. Residues 261 to 281 (TLSIVMGVFVLCWLPFFVLTI) traverse the membrane as a helical segment. Residues 282–296 (TDPFIDFTTPEDLYN) lie on the Extracellular side of the membrane. Residues 297-317 (VFLWLGYFNSTFNPIIYGMFY) traverse the membrane as a helical segment. Topologically, residues 318–347 (PWFRKALRMIVTGTIFRSDSSTSSLHPAHP) are cytoplasmic.

It belongs to the G-protein coupled receptor 1 family. In terms of tissue distribution, specifically expressed in neurons of the olfactory epithelium, to discrete glomeruli predominantly localized to a confined bulb region. Present in the dorsal area of the main olfactory epithelium.

Its subcellular location is the cell membrane. In terms of biological role, olfactory receptor specific for 2-phenylethylamine, a trace amine present at high concentration in the urine of carnivore species, playing a key role in fear and avoidance responses. 2-phenylethylamine acts as a kairomone in the chemical detection of carnivore odor and triggers fear in mice. This receptor is probably mediated by the G(s)-class of G-proteins which activate adenylate cyclase. The polypeptide is Trace amine-associated receptor 4 (Mus musculus (Mouse)).